The following is a 172-amino-acid chain: Stellate protein CG33236/CG33240/CG33244/CG33245 (172 aa).

It belongs to the casein kinase 2 subunit beta family. Interacts in vitro with the casein kinase 2 alpha subunit (CkII-alpha). The relevance of such interaction is however unclear in vivo. Probably not expressed in wild-type flies. In males lacking the Y chromosome, it is testis-specific and constitutes the main component of star-shaped crystals.

In terms of biological role, unknown. In males lacking the Y chromosome, its strong overexpression leads to the appearance of proteinaceous star-shaped crystals in the primary spermatocytes causing meiotic drive, possibly by interfering with normal casein kinase 2 activity. The protein is Stellate protein CG33236/CG33240/CG33244/CG33245 (Ste:CG33236) of Drosophila melanogaster (Fruit fly).